A 221-amino-acid chain; its full sequence is Glutathione S-transferase Z1 (221 aa).

The 82-residue stretch at 7–88 folds into the GST N-terminal domain; sequence EKLKLYSYWR…YLDEKYPEPP (82 aa). Glutathione contacts are provided by residues 17–18, 17–22, glutamine 46, 46–47, 59–60, valine 60, 72–73, glutamine 112, and 116–118; these read SS, SSCAHR, QF, TV, DS, and NLA. The GST C-terminal domain maps to 93–218; that stretch reads DLHKRAVNYQ…LPEKQPDAPS (126 aa).

It belongs to the GST superfamily. Zeta family. Homodimer.

The protein resides in the cytoplasm. It localises to the cytosol. The enzyme catalyses RX + glutathione = an S-substituted glutathione + a halide anion + H(+). In terms of biological role, acts a maleylacetone isomerase. Also catalyzes the glutathione-dependent dehalogenation of dichloroacetic acid to glyoxylic acid. In vitro, possesses glutathione peroxidase activity toward cumene hydroperoxide and linoleic acid-13-hydroperoxide. This chain is Glutathione S-transferase Z1 (GSTZ1), found in Arabidopsis thaliana (Mouse-ear cress).